The following is a 182-amino-acid chain: Large ribosomal subunit protein uL5c (182 aa).

The protein belongs to the universal ribosomal protein uL5 family. Part of the 50S ribosomal subunit; contacts the 5S rRNA.

Its subcellular location is the plastid. It is found in the chloroplast. Binds 5S rRNA, forms part of the central protuberance of the 50S subunit. This chain is Large ribosomal subunit protein uL5c (rpl5), found in Emiliania huxleyi (Coccolithophore).